Here is a 117-residue protein sequence, read N- to C-terminus: UPF0122 protein Teth514_1714 (117 aa).

The protein belongs to the UPF0122 family.

Might take part in the signal recognition particle (SRP) pathway. This is inferred from the conservation of its genetic proximity to ftsY/ffh. May be a regulatory protein. This is UPF0122 protein Teth514_1714 from Thermoanaerobacter sp. (strain X514).